The primary structure comprises 99 residues: Leydig cell tumor 10 kDa protein homolog (99 aa).

The interval 1–36 is disordered; it reads MAQGQRKFQAHKPAKSKTAAAASEKNRGPRKGGRVI.

Belongs to the UPF0390 family.

May have a potential role in hypercalcemia of malignancy. The polypeptide is Leydig cell tumor 10 kDa protein homolog (C19orf53) (Homo sapiens (Human)).